Consider the following 323-residue polypeptide: tRNA dimethylallyltransferase (323 aa).

ATP is bound at residue 12 to 19 (GPTAAGKT). 14–19 (TAAGKT) serves as a coordination point for substrate. Interaction with substrate tRNA regions lie at residues 37–40 (DSAL) and 161–165 (QRLIR).

This sequence belongs to the IPP transferase family. Monomer. Requires Mg(2+) as cofactor.

The enzyme catalyses adenosine(37) in tRNA + dimethylallyl diphosphate = N(6)-dimethylallyladenosine(37) in tRNA + diphosphate. Functionally, catalyzes the transfer of a dimethylallyl group onto the adenine at position 37 in tRNAs that read codons beginning with uridine, leading to the formation of N6-(dimethylallyl)adenosine (i(6)A). The sequence is that of tRNA dimethylallyltransferase from Pseudomonas syringae pv. syringae (strain B728a).